The chain runs to 61 residues: Large ribosomal subunit protein bL32 (61 aa).

The span at 1–16 (MAVPKRKTSPSKRGMR) shows a compositional bias: basic residues. The segment at 1–61 (MAVPKRKTSP…RQVLTPKESA (61 aa)) is disordered. Residues 28–44 (VEDKNSGELRRPHHIDL) show a composition bias toward basic and acidic residues.

The protein belongs to the bacterial ribosomal protein bL32 family.

The sequence is that of Large ribosomal subunit protein bL32 from Rhizobium etli (strain CIAT 652).